The following is a 102-amino-acid chain: Monothiol glutaredoxin-S6 (102 aa).

Residues 1–101 (MESVRSLVED…AMLRRAGAIW (101 aa)) form the Glutaredoxin domain. Position 21 (Cys-21) interacts with [2Fe-2S] cluster.

Belongs to the glutaredoxin family. CC-type subfamily.

Its subcellular location is the cytoplasm. Functionally, may only reduce GSH-thiol disulfides, but not protein disulfides. The protein is Monothiol glutaredoxin-S6 (GRXS6) of Arabidopsis thaliana (Mouse-ear cress).